A 596-amino-acid chain; its full sequence is MDHIRNFSIIAHIDHGKSTLADRIIHLCGGLSDREMEAQVLDSMDIERERGITIKAQTAALSYKARDGKVYNLNLIDTPGHVDFSYEVSRSLSACEGALLVVDASQGVEAQTVANCYTALELDVEVVPVLNKIDLPSADPENARQEIEDVIGIDASEAVLASAKTGLGVEDILEAVVARIPPPKGNPDAPLKALIIDSWFDNYVGVVMLVRVVDGVIKPKDKLLFMATEAEQLCEQVGVFAPKSEKRDMLRAGEVGFVISGIKELKAAKVGDTITTMDRKATEALPGFKEIKPQVFAGLYPVESNQYDSLRESLEKLKLNDASLQYEPEVSQALGFGFRCGFLGLLHMEIVQERLEREFDQDLITTAPTVVYQVVMRDGSIIEVENPAKLPDVTKMEEVREPIITATIFVPQDYLGNVITLCNQKRGNQVDMHYHGRQVKLVYEMPMAEVVMDFFDKLKSCSKGYASLDYDFKEYRAADVVKLDILINSEKVDALSLIVHRANAQYRGRELASKMRELIPRQMYDVAIQAAIGSHIISRENVKAMRKDVLAKCYGGDISRKKKLLEKQKAGKKRMKQVGSVEIPQEAFLAVLRVDN.

Residues 2–184 (DHIRNFSIIA…AVVARIPPPK (183 aa)) form the tr-type G domain. GTP is bound by residues 14–19 (DHGKST) and 131–134 (NKID).

This sequence belongs to the TRAFAC class translation factor GTPase superfamily. Classic translation factor GTPase family. LepA subfamily.

It localises to the cell inner membrane. The enzyme catalyses GTP + H2O = GDP + phosphate + H(+). Required for accurate and efficient protein synthesis under certain stress conditions. May act as a fidelity factor of the translation reaction, by catalyzing a one-codon backward translocation of tRNAs on improperly translocated ribosomes. Back-translocation proceeds from a post-translocation (POST) complex to a pre-translocation (PRE) complex, thus giving elongation factor G a second chance to translocate the tRNAs correctly. Binds to ribosomes in a GTP-dependent manner. The protein is Elongation factor 4 of Dechloromonas aromatica (strain RCB).